We begin with the raw amino-acid sequence, 757 residues long: Endonuclease MutS2 (757 aa).

Residue 321–328 (GPNMGGKT) coordinates ATP. Residues 681-756 (IDIRGMTVEE…GTGVTVVEVE (76 aa)) enclose the Smr domain.

The protein belongs to the DNA mismatch repair MutS family. MutS2 subfamily. In terms of assembly, homodimer. Binds to stalled ribosomes, contacting rRNA.

Endonuclease that is involved in the suppression of homologous recombination and thus may have a key role in the control of bacterial genetic diversity. In terms of biological role, acts as a ribosome collision sensor, splitting the ribosome into its 2 subunits. Detects stalled/collided 70S ribosomes which it binds and splits by an ATP-hydrolysis driven conformational change. Acts upstream of the ribosome quality control system (RQC), a ribosome-associated complex that mediates the extraction of incompletely synthesized nascent chains from stalled ribosomes and their subsequent degradation. Probably generates substrates for RQC. The polypeptide is Endonuclease MutS2 (Thermotoga neapolitana (strain ATCC 49049 / DSM 4359 / NBRC 107923 / NS-E)).